Here is a 159-residue protein sequence, read N- to C-terminus: Thioredoxin O2, mitochondrial (159 aa).

Ser40 carries the phosphoserine modification. Positions 43–159 constitute a Thioredoxin domain; that stretch reads FAEGDRSSFV…LKSVMEQLYK (117 aa). Active-site nucleophile residues include Cys83 and Cys86. Cys83 and Cys86 are joined by a disulfide.

Belongs to the thioredoxin family. Plant O-type subfamily.

It localises to the mitochondrion. Its function is as follows. Thiol-disulfide oxidoreductase that may participate in various redox reactions. Possesses insulin disulfide bonds reducing activity. Reduced by thioredoxin reductases NTRA and NTRB. This chain is Thioredoxin O2, mitochondrial, found in Arabidopsis thaliana (Mouse-ear cress).